Here is a 351-residue protein sequence, read N- to C-terminus: MLETLRERLLSVQQDFTSGLKTLGDKSREAKKSRQRTAQCSPEFSAGLELLSRYEDAWAALHKGAKDCAKAGELVDSEVVMLSAHWEKKRNSLVELQDQLQQIPGFLADLECLTASLARLEANFEEMETHLLCLEDLCEQCELERYKCVQTLQLENYKKTKRKELENFKAELDAEHAQKVLDMEHTQQMKLKERQKFFEEAFQQDMEQYLSTGYLQIAERREPIGSMSSMEVNVDMLEQMDLMDMSDQEALDVFLNSGGEDNNMLSPMLGPDSSTYVNEISLQVPSQSELRHKLSSLSSTCTDSASQEASEGESPVVQSDEEEVQVDTALAAVAERKGASDVSDESDSQTI.

A coiled-coil region spans residues 106–179 (FLADLECLTA…AELDAEHAQK (74 aa)). Residues 291 to 325 (RHKLSSLSSTCTDSASQEASEGESPVVQSDEEEVQ) form a disordered region. The span at 295-306 (SSLSSTCTDSAS) shows a compositional bias: low complexity.

The protein belongs to the dysbindin family. As to quaternary structure, component of the biogenesis of lysosome-related organelles complex 1 (BLOC-1).

The protein localises to the cytoplasm. It is found in the cytoplasmic vesicle membrane. It localises to the cytoplasmic vesicle. The protein resides in the secretory vesicle. Its subcellular location is the synaptic vesicle membrane. The protein localises to the endosome membrane. It is found in the melanosome membrane. It localises to the nucleus. The protein resides in the postsynaptic density. Its subcellular location is the endoplasmic reticulum. Its function is as follows. Component of the BLOC-1 complex, a complex that is required for normal biogenesis of lysosome-related organelles (LRO), such as platelet dense granules and melanosomes. Plays a role in intracellular vesicle trafficking. Plays a role in synaptic vesicle trafficking and in neurotransmitter release. May be required for normal dopamine homeostasis in the cerebral cortex, hippocampus, and hypothalamus. Plays a role in the regulation of cell surface exposure of DRD2. Contributes to the regulation of dopamine signaling. May play a role in actin cytoskeleton reorganization and neurite outgrowth. This is Dysbindin (DTNBP1) from Gallus gallus (Chicken).